Reading from the N-terminus, the 276-residue chain is Large ribosomal subunit protein uL2 (276 aa).

Disordered stretches follow at residues 36–58 (PLHK…GGGH) and 214–276 (LGKR…RRKK).

Belongs to the universal ribosomal protein uL2 family. As to quaternary structure, part of the 50S ribosomal subunit. Forms a bridge to the 30S subunit in the 70S ribosome.

Its function is as follows. One of the primary rRNA binding proteins. Required for association of the 30S and 50S subunits to form the 70S ribosome, for tRNA binding and peptide bond formation. It has been suggested to have peptidyltransferase activity; this is somewhat controversial. Makes several contacts with the 16S rRNA in the 70S ribosome. This is Large ribosomal subunit protein uL2 from Halalkalibacterium halodurans (strain ATCC BAA-125 / DSM 18197 / FERM 7344 / JCM 9153 / C-125) (Bacillus halodurans).